We begin with the raw amino-acid sequence, 410 residues long: 2,3-bisphosphoglycerate-independent phosphoglycerate mutase (410 aa).

Belongs to the BPG-independent phosphoglycerate mutase family. A-PGAM subfamily.

It carries out the reaction (2R)-2-phosphoglycerate = (2R)-3-phosphoglycerate. It functions in the pathway carbohydrate degradation; glycolysis; pyruvate from D-glyceraldehyde 3-phosphate: step 3/5. Functionally, catalyzes the interconversion of 2-phosphoglycerate and 3-phosphoglycerate. The protein is 2,3-bisphosphoglycerate-independent phosphoglycerate mutase of Pyrococcus abyssi (strain GE5 / Orsay).